The following is a 603-amino-acid chain: Sulfoacetaldehyde acetyltransferase (603 aa).

This sequence belongs to the TPP enzyme family. As to quaternary structure, homodimer or homotetramer. Mg(2+) is required as a cofactor. Requires thiamine diphosphate as cofactor.

It localises to the cytoplasm. The catalysed reaction is acetyl phosphate + sulfite + H(+) = sulfoacetaldehyde + phosphate. The protein operates within organosulfur degradation; taurine degradation via aerobic pathway; acetyl phosphate and sulfite from taurine: step 2/2. The protein is Sulfoacetaldehyde acetyltransferase (xsc) of Alcaligenes xylosoxydans xylosoxydans (Achromobacter xylosoxidans).